A 396-amino-acid chain; its full sequence is 1-deoxy-D-xylulose 5-phosphate reductoisomerase (396 aa).

NADPH is bound by residues T14, G15, S16, I17, G40, and N128. K129 contributes to the 1-deoxy-D-xylulose 5-phosphate binding site. E130 is an NADPH binding site. Mn(2+) is bound at residue D154. S155, E156, S180, and H203 together coordinate 1-deoxy-D-xylulose 5-phosphate. Residue E156 participates in Mn(2+) binding. Residue G209 participates in NADPH binding. Residues S216, N221, K222, and E225 each contribute to the 1-deoxy-D-xylulose 5-phosphate site. Residue E225 coordinates Mn(2+).

It belongs to the DXR family. Requires Mg(2+) as cofactor. The cofactor is Mn(2+).

It catalyses the reaction 2-C-methyl-D-erythritol 4-phosphate + NADP(+) = 1-deoxy-D-xylulose 5-phosphate + NADPH + H(+). The protein operates within isoprenoid biosynthesis; isopentenyl diphosphate biosynthesis via DXP pathway; isopentenyl diphosphate from 1-deoxy-D-xylulose 5-phosphate: step 1/6. Catalyzes the NADPH-dependent rearrangement and reduction of 1-deoxy-D-xylulose-5-phosphate (DXP) to 2-C-methyl-D-erythritol 4-phosphate (MEP). The protein is 1-deoxy-D-xylulose 5-phosphate reductoisomerase of Xylella fastidiosa (strain 9a5c).